The following is a 524-amino-acid chain: Sterol O-acyltransferase 2 (524 aa).

The segment at 1–31 (MEPKAPQLRRRERQGEEQENGACGEGNTRTH) is disordered. The Cytoplasmic segment spans residues 1 to 118 (MEPKAPQLRR…LDELMGVQHF (118 aa)). Histidine 117 is a binding site for cholesterol. A helical membrane pass occupies residues 119–140 (RTIYHMFIAGLCVLIISTLAID). The Lumenal portion of the chain corresponds to 141 to 160 (FIDEGRLMLEFDLLLFSFGQ). Residues 161–186 (LPLALMMWVPMFLSTLLLPYQTLRLW) traverse the membrane as a helical segment. The Cytoplasmic portion of the chain corresponds to 187-198 (ARPRSGGAWTLG). The helical transmembrane segment at 199-222 (ASLGCVLLAAHAAVLCVLPVHVSV) threads the bilayer. The Lumenal portion of the chain corresponds to 223–230 (KHELPPAS). The helical transmembrane segment at 231–254 (RCVLVFEQVRFLMKSYSFLRETVP) threads the bilayer. Residues 255-295 (GIFCVRGGKGICTPSFSSYLYFLFCPTLIYRETYPRTPSIR) lie on the Cytoplasmic side of the membrane. A Cysteine sulfenic acid (-SOH); alternate modification is found at cysteine 279. Cysteine 279 participates in a covalent cross-link: Glycyl cysteine thioester (Cys-Gly) (interchain with G-Cter in ubiquitin); alternate. Residues 296–328 (WNYVAKNFAQALGCLLYACFILGRLCVPVFANM) form a helical membrane-spanning segment. Residues 329 to 345 (SREPFSTRALLLSILHA) are Lumenal-facing. The chain crosses the membrane as a helical span at residues 346-371 (TGPGIFMLLLIFFAFLHCWLNAFAEM). The Cytoplasmic segment spans residues 372–419 (LRFGDRMFYRDWWNSTSFSNYYRTWNVVVHDWLYSYVYQDGLWLLGRQ). An FYXDWWN motif motif is present at residues 379 to 385 (FYRDWWN). Residues asparagine 391, arginine 394, asparagine 397, histidine 401, tyrosine 409, and serine 432 each coordinate an acyl-CoA. Residues 420-444 (GRGAAMLGVFLVSALVHEYIFCFVL) traverse the membrane as a helical segment. Residue histidine 436 is part of the active site. The Lumenal portion of the chain corresponds to 445 to 450 (GFFYPV). Residues 451 to 466 (MLILFLVVGGLLNFTM) traverse the membrane as a helical segment. Residues 467 to 472 (NDRHTG) are Cytoplasmic-facing. The helical transmembrane segment at 473–504 (PAWNILMWTFLFLGQGIQVSLYCQEWYARRHC) threads the bilayer. The Lumenal portion of the chain corresponds to 505 to 524 (PLPQPTFWELVTPRSWSCHP).

It belongs to the membrane-bound acyltransferase family. Sterol o-acyltransferase subfamily. In terms of assembly, may form homo- or heterodimers. Interacts with INSIG1; the interaction is direct and promotes association with AMFR/gp78. In terms of processing, polyubiquitinated by AMFR/gp78 at Cys-279, leading to its degradation when the lipid levels are low. Association with AMFR/gp78 is mediated via interaction with INSIG1. High concentration of cholesterol and fatty acid results in Cys-279 oxidation, preventing ubiquitination at the same site, resulting in protein stabilization. Oxidized at Cys-279: high concentration of cholesterol and fatty acid induce reactive oxygen species, which oxidizes Cys-279, preventing ubiquitination at the same site, and resulting in protein stabilization.

The protein resides in the endoplasmic reticulum membrane. It carries out the reaction a sterol + a long-chain fatty acyl-CoA = a long-chain 3-hydroxysterol ester + CoA. The catalysed reaction is cholesterol + an acyl-CoA = a cholesterol ester + CoA. The enzyme catalyses cholesterol + (9Z)-octadecenoyl-CoA = cholesteryl (9Z-octadecenoate) + CoA. It catalyses the reaction (5Z,8Z,11Z,14Z,17Z)-eicosapentaenoyl-CoA + cholesterol = (5Z,8Z,11Z,14Z,17Z-eicosapentaenoyl)-cholesterol + CoA. It carries out the reaction (9Z,12Z,15Z)-octadecatrienoyl-CoA + cholesterol = (9Z,12Z,15Z-octadecatrienoyl)-cholesterol + CoA. The catalysed reaction is (5Z,8Z,11Z,14Z)-eicosatetraenoyl-CoA + cholesterol = cholesteryl (5Z,8Z,11Z,14Z)-eicosatetraenoate + CoA. Functionally, catalyzes the formation of fatty acid-cholesterol esters, which are less soluble in membranes than cholesterol. Plays a role in lipoprotein assembly and dietary cholesterol absorption. Utilizes oleoyl-CoA ((9Z)-octadecenoyl-CoA) and linolenoyl-CoA ((9Z,12Z,15Z)-octadecatrienoyl-CoA) as substrates. May provide cholesteryl esters for lipoprotein secretion from hepatocytes and intestinal mucosa. This chain is Sterol O-acyltransferase 2, found in Rattus norvegicus (Rat).